A 442-amino-acid chain; its full sequence is HTH-type transcriptional regulator NorG (442 aa).

One can recognise an HTH gntR-type domain in the interval 2–46 (KIPSHRQLAIQYNVNRVTIIKSIELLEAEGFIYTKVGSGTYVNDY). The H-T-H motif DNA-binding region spans 6–25 (HRQLAIQYNVNRVTIIKSIE). At K288 the chain carries N6-(pyridoxal phosphate)lysine.

The protein in the C-terminal section; belongs to the class-I pyridoxal-phosphate-dependent aminotransferase family. The cofactor is pyridoxal 5'-phosphate.

In terms of biological role, positively regulates the expression of the NorB efflux pump and negatively regulates the expression of the AbcA efflux pump. Binds specifically to the promoters of norA, norB and norC and abcA genes. Could also have an aminotransferase activity. The sequence is that of HTH-type transcriptional regulator NorG (norG) from Staphylococcus aureus (strain USA300).